A 144-amino-acid chain; its full sequence is Large ribosomal subunit protein uL15 (144 aa).

The interval 1–48 is disordered; sequence MQLNNLKPAAGSKHAKRRVGRGIGSGLGKTAGRGHKGQKSRSGGFHKV. The span at 21-31 shows a compositional bias: gly residues; sequence RGIGSGLGKTA.

The protein belongs to the universal ribosomal protein uL15 family. As to quaternary structure, part of the 50S ribosomal subunit.

Functionally, binds to the 23S rRNA. The sequence is that of Large ribosomal subunit protein uL15 from Cupriavidus taiwanensis (strain DSM 17343 / BCRC 17206 / CCUG 44338 / CIP 107171 / LMG 19424 / R1) (Ralstonia taiwanensis (strain LMG 19424)).